Reading from the N-terminus, the 152-residue chain is 3-hydroxyacyl-[acyl-carrier-protein] dehydratase FabZ (152 aa).

His58 is an active-site residue.

It belongs to the thioester dehydratase family. FabZ subfamily.

It localises to the cytoplasm. The enzyme catalyses a (3R)-hydroxyacyl-[ACP] = a (2E)-enoyl-[ACP] + H2O. Involved in unsaturated fatty acids biosynthesis. Catalyzes the dehydration of short chain beta-hydroxyacyl-ACPs and long chain saturated and unsaturated beta-hydroxyacyl-ACPs. This Prochlorococcus marinus subsp. pastoris (strain CCMP1986 / NIES-2087 / MED4) protein is 3-hydroxyacyl-[acyl-carrier-protein] dehydratase FabZ.